The following is a 156-amino-acid chain: Arginine repressor (156 aa).

Belongs to the ArgR family.

Its subcellular location is the cytoplasm. Its pathway is amino-acid biosynthesis; L-arginine biosynthesis [regulation]. Functionally, regulates arginine biosynthesis genes. This is Arginine repressor from Aeromonas hydrophila subsp. hydrophila (strain ATCC 7966 / DSM 30187 / BCRC 13018 / CCUG 14551 / JCM 1027 / KCTC 2358 / NCIMB 9240 / NCTC 8049).